We begin with the raw amino-acid sequence, 385 residues long: tRNA (guanine(26)-N(2))-dimethyltransferase (385 aa).

Positions methionine 1–threonine 379 constitute a Trm1 methyltransferase domain. Positions 37, 67, 82, 108, and 109 each coordinate S-adenosyl-L-methionine. Zn(2+) is bound by residues cysteine 247, cysteine 250, cysteine 267, and cysteine 270.

Belongs to the class I-like SAM-binding methyltransferase superfamily. Trm1 family.

It carries out the reaction guanosine(26) in tRNA + 2 S-adenosyl-L-methionine = N(2)-dimethylguanosine(26) in tRNA + 2 S-adenosyl-L-homocysteine + 2 H(+). Its function is as follows. Dimethylates a single guanine residue at position 26 of a number of tRNAs using S-adenosyl-L-methionine as donor of the methyl groups. The chain is tRNA (guanine(26)-N(2))-dimethyltransferase from Haloquadratum walsbyi (strain DSM 16790 / HBSQ001).